Here is a 334-residue protein sequence, read N- to C-terminus: tRNA N6-adenosine threonylcarbamoyltransferase (334 aa).

The Fe cation site is built by H111 and H115. Substrate contacts are provided by residues 134–138, D167, G180, D184, and N272; that span reads IVSGG. D300 provides a ligand contact to Fe cation.

The protein belongs to the KAE1 / TsaD family. Requires Fe(2+) as cofactor.

The protein localises to the cytoplasm. The catalysed reaction is L-threonylcarbamoyladenylate + adenosine(37) in tRNA = N(6)-L-threonylcarbamoyladenosine(37) in tRNA + AMP + H(+). Its function is as follows. Required for the formation of a threonylcarbamoyl group on adenosine at position 37 (t(6)A37) in tRNAs that read codons beginning with adenine. Is involved in the transfer of the threonylcarbamoyl moiety of threonylcarbamoyl-AMP (TC-AMP) to the N6 group of A37, together with TsaE and TsaB. TsaD likely plays a direct catalytic role in this reaction. The protein is tRNA N6-adenosine threonylcarbamoyltransferase of Dictyoglomus turgidum (strain DSM 6724 / Z-1310).